We begin with the raw amino-acid sequence, 253 residues long: Probable transcriptional regulatory protein syc0529_d (253 aa).

The protein belongs to the TACO1 family.

It is found in the cytoplasm. The polypeptide is Probable transcriptional regulatory protein syc0529_d (Synechococcus sp. (strain ATCC 27144 / PCC 6301 / SAUG 1402/1) (Anacystis nidulans)).